The chain runs to 293 residues: ATP synthase gamma chain (293 aa).

The protein belongs to the ATPase gamma chain family. As to quaternary structure, F-type ATPases have 2 components, CF(1) - the catalytic core - and CF(0) - the membrane proton channel. CF(1) has five subunits: alpha(3), beta(3), gamma(1), delta(1), epsilon(1). CF(0) has three main subunits: a, b and c.

It localises to the cell inner membrane. Produces ATP from ADP in the presence of a proton gradient across the membrane. The gamma chain is believed to be important in regulating ATPase activity and the flow of protons through the CF(0) complex. The sequence is that of ATP synthase gamma chain from Beijerinckia indica subsp. indica (strain ATCC 9039 / DSM 1715 / NCIMB 8712).